The sequence spans 824 residues: AMP deaminase 2 (824 aa).

Residues 1–43 (MASYPGPGKSKAKYPFKKRASLQASAAAPEARSGLGASPLQSA) are disordered. Basic residues predominate over residues 10-20 (SKAKYPFKKRA). The residue at position 21 (Ser-21) is a Phosphoserine. Residues 21-33 (SLQASAAAPEARS) show a composition bias toward low complexity. Omega-N-methylarginine is present on Arg-44. A phosphoserine mark is found at Ser-45, Ser-63, and Ser-79. The residue at position 90 (Tyr-90) is a Phosphotyrosine. 2 positions are modified to phosphoserine: Ser-96 and Ser-113. A Phosphothreonine modification is found at Thr-133. Ser-135 and Ser-137 each carry phosphoserine. 2 residues coordinate Zn(2+): His-364 and His-366. Substrate contacts are provided by residues His-366 and 435-440 (KFNAKY). His-633 is a Zn(2+) binding site. Glu-636 is a substrate binding site. His-655 serves as the catalytic Proton acceptor. Asp-710 serves as a coordination point for Zn(2+). 711–714 (DPLQ) provides a ligand contact to substrate.

It belongs to the metallo-dependent hydrolases superfamily. Adenosine and AMP deaminases family. In terms of assembly, homotetramer. Zn(2+) is required as a cofactor.

The enzyme catalyses AMP + H2O + H(+) = IMP + NH4(+). It functions in the pathway purine metabolism; IMP biosynthesis via salvage pathway; IMP from AMP: step 1/1. AMP deaminase plays a critical role in energy metabolism. Catalyzes the deamination of AMP to IMP and plays an important role in the purine nucleotide cycle. The sequence is that of AMP deaminase 2 from Rattus norvegicus (Rat).